The sequence spans 467 residues: Sexual differentiation process putative subtilase-type proteinase isp6 (467 aa).

Positions 86 to 176 (YIIVLQPDLS…AVERDQVVSI (91 aa)) constitute an Inhibitor I9 domain. Residues 186–467 (PWGLARISHK…NLLAFNGAQE (282 aa)) enclose the Peptidase S8 domain. Residues Asp221, His253, and Ser409 each act as charge relay system in the active site.

The protein belongs to the peptidase S8 family.

The protein is Sexual differentiation process putative subtilase-type proteinase isp6 (isp6) of Schizosaccharomyces pombe (strain 972 / ATCC 24843) (Fission yeast).